We begin with the raw amino-acid sequence, 302 residues long: Methylsterol monooxygenase erg25A (302 aa).

N-linked (GlcNAc...) asparagine glycosylation is present at Asn-5. The next 3 helical transmembrane spans lie at 47 to 67, 105 to 125, and 132 to 152; these read NIVA…IYFS, YILL…HPMM, and FTIP…FFLL. A Fatty acid hydroxylase domain is found at 147–283; it reads IIFFLLEDTY…FRHWDVLMGT (137 aa). The Histidine box-1 motif lies at 161–165; that stretch reads HRAMH. The short motif at 174 to 178 is the Histidine box-2 element; the sequence is HRIHH. The helical transmembrane segment at 193-213 threads the bilayer; the sequence is PWETLLLGLGTIGPPLLLALM. The Histidine box-3 motif lies at 258–264; it reads WHDDHHR. A glycan (N-linked (GlcNAc...) asparagine) is linked at Asn-269.

This sequence belongs to the sterol desaturase family. It depends on Fe cation as a cofactor.

Its subcellular location is the endoplasmic reticulum membrane. It functions in the pathway steroid metabolism; ergosterol biosynthesis. Functionally, sterol-C4-methyl oxidase; part of the third module of ergosterol biosynthesis pathway that includes the late steps of the pathway. Erg25A is a catalytic component of the C-4 demethylation complex that catalyzes the conversion of 4,4-dimethylfecosterol into fecosterol via 4-methylfecosterol. The third module or late pathway involves the ergosterol synthesis itself through consecutive reactions that mainly occur in the endoplasmic reticulum (ER) membrane. Firstly, the squalene synthase erg9 catalyzes the condensation of 2 farnesyl pyrophosphate moieties to form squalene, which is the precursor of all steroids. Squalene synthase is crucial for balancing the incorporation of farnesyl diphosphate (FPP) into sterol and nonsterol isoprene synthesis. Secondly, squalene is converted into lanosterol by the consecutive action of the squalene epoxidase erg1 and the lanosterol synthase erg7. Then, the delta(24)-sterol C-methyltransferase erg6 methylates lanosterol at C-24 to produce eburicol. Eburicol is the substrate of the sterol 14-alpha demethylase encoded by cyp51A and cyp51B, to yield 4,4,24-trimethyl ergosta-8,14,24(28)-trienol. The C-14 reductase erg24 then reduces the C14=C15 double bond which leads to 4,4-dimethylfecosterol. A sequence of further demethylations at C-4, involving the C-4 demethylation complex containing the C-4 methylsterol oxidases erg25A or erg25B, the sterol-4-alpha-carboxylate 3-dehydrogenase erg26 and the 3-keto-steroid reductase erg27, leads to the production of fecosterol via 4-methylfecosterol. The C-8 sterol isomerase erg2 then catalyzes the reaction which results in unsaturation at C-7 in the B ring of sterols and thus converts fecosterol to episterol. The sterol-C5-desaturase erg3B then catalyzes the introduction of a C-5 double bond in the B ring to produce 5-dehydroepisterol. The 2 other sterol-C5-desaturases, erg3A and erg3C, seem to be less important in ergosterol biosynthesis. The C-22 sterol desaturase erg5 further converts 5-dehydroepisterol into ergosta-5,7,22,24(28)-tetraen-3beta-ol by forming the C-22(23) double bond in the sterol side chain. Finally, ergosta-5,7,22,24(28)-tetraen-3beta-ol is substrate of the C-24(28) sterol reductases erg4A and erg4B to produce ergosterol. Possible alternative sterol biosynthetic pathways might exist from fecosterol to ergosterol, depending on the activities of the erg3 isoforms. The polypeptide is Methylsterol monooxygenase erg25A (Aspergillus fumigatus (strain ATCC MYA-4609 / CBS 101355 / FGSC A1100 / Af293) (Neosartorya fumigata)).